The primary structure comprises 209 residues: Uracil phosphoribosyltransferase (209 aa).

Residues Arg-78, Arg-103, and 130 to 138 each bind 5-phospho-alpha-D-ribose 1-diphosphate; that span reads DPMFATGGT. Residues Ile-193 and 198–200 each bind uracil; that span reads GDA. Asp-199 lines the 5-phospho-alpha-D-ribose 1-diphosphate pocket.

The protein belongs to the UPRTase family. The cofactor is Mg(2+).

The catalysed reaction is UMP + diphosphate = 5-phospho-alpha-D-ribose 1-diphosphate + uracil. Its pathway is pyrimidine metabolism; UMP biosynthesis via salvage pathway; UMP from uracil: step 1/1. With respect to regulation, allosterically activated by GTP. Catalyzes the conversion of uracil and 5-phospho-alpha-D-ribose 1-diphosphate (PRPP) to UMP and diphosphate. In Campylobacter fetus subsp. fetus (strain 82-40), this protein is Uracil phosphoribosyltransferase.